Reading from the N-terminus, the 106-residue chain is Large ribosomal subunit protein bL21 (106 aa).

This sequence belongs to the bacterial ribosomal protein bL21 family. As to quaternary structure, part of the 50S ribosomal subunit. Contacts protein L20.

Its function is as follows. This protein binds to 23S rRNA in the presence of protein L20. In Thermosipho africanus (strain TCF52B), this protein is Large ribosomal subunit protein bL21.